The primary structure comprises 410 residues: Acetate kinase (410 aa).

Position 7 (asparagine 7) interacts with Mg(2+). Lysine 14 is an ATP binding site. Residue arginine 98 coordinates substrate. The active-site Proton donor/acceptor is aspartate 155. ATP-binding positions include histidine 215–glycine 219, aspartate 290–arginine 292, and glycine 338–asparagine 342. A Mg(2+)-binding site is contributed by glutamate 392.

Belongs to the acetokinase family. Homodimer. Mg(2+) serves as cofactor. The cofactor is Mn(2+).

The protein resides in the cytoplasm. The catalysed reaction is acetate + ATP = acetyl phosphate + ADP. It participates in metabolic intermediate biosynthesis; acetyl-CoA biosynthesis; acetyl-CoA from acetate: step 1/2. Catalyzes the formation of acetyl phosphate from acetate and ATP. Can also catalyze the reverse reaction. The sequence is that of Acetate kinase from Kocuria rhizophila (strain ATCC 9341 / DSM 348 / NBRC 103217 / DC2201).